We begin with the raw amino-acid sequence, 128 residues long: MQRHMLKSKIHRAAVTHCELHYEGSCAIDEDLLEAAGLIENERIDIWNINNGERFSTYAIKGERGSGMISLNGSAARRAQLGDLVIIAAFAMVDEAELQAGWKPKLVFIDEGNKIKGHRDHVPTQNWT.

The Schiff-base intermediate with substrate; via pyruvic acid role is filled by Ser25. Residue Ser25 is modified to Pyruvic acid (Ser). Thr57 contributes to the substrate binding site. Catalysis depends on Tyr58, which acts as the Proton donor. 73–75 (GSA) is a substrate binding site.

The protein belongs to the PanD family. As to quaternary structure, heterooctamer of four alpha and four beta subunits. Pyruvate is required as a cofactor. In terms of processing, is synthesized initially as an inactive proenzyme, which is activated by self-cleavage at a specific serine bond to produce a beta-subunit with a hydroxyl group at its C-terminus and an alpha-subunit with a pyruvoyl group at its N-terminus.

The protein localises to the cytoplasm. It catalyses the reaction L-aspartate + H(+) = beta-alanine + CO2. Its pathway is cofactor biosynthesis; (R)-pantothenate biosynthesis; beta-alanine from L-aspartate: step 1/1. In terms of biological role, catalyzes the pyruvoyl-dependent decarboxylation of aspartate to produce beta-alanine. The protein is Aspartate 1-decarboxylase of Burkholderia cenocepacia (strain ATCC BAA-245 / DSM 16553 / LMG 16656 / NCTC 13227 / J2315 / CF5610) (Burkholderia cepacia (strain J2315)).